We begin with the raw amino-acid sequence, 227 residues long: Ribonuclease 3 (227 aa).

The RNase III domain maps to 7–132; sequence LTAFMDRLGY…VIAAVYLDGG (126 aa). Position 45 (Glu45) interacts with Mg(2+). The active site involves Asp49. Mg(2+) contacts are provided by Asp118 and Glu121. Glu121 is an active-site residue. The DRBM domain occupies 157-226; that stretch reads DAKTALQEWA…AKDLLAQLAG (70 aa).

It belongs to the ribonuclease III family. Homodimer. Requires Mg(2+) as cofactor.

It localises to the cytoplasm. The catalysed reaction is Endonucleolytic cleavage to 5'-phosphomonoester.. Functionally, digests double-stranded RNA. Involved in the processing of primary rRNA transcript to yield the immediate precursors to the large and small rRNAs (23S and 16S). Processes some mRNAs, and tRNAs when they are encoded in the rRNA operon. Processes pre-crRNA and tracrRNA of type II CRISPR loci if present in the organism. The sequence is that of Ribonuclease 3 from Jannaschia sp. (strain CCS1).